The following is a 575-amino-acid chain: Sodium/hydrogen exchanger 8 (575 aa).

11 helical membrane passes run 54–74, 78–98, 117–137, 150–170, 185–205, 255–275, 305–325, 348–368, 373–393, 411–431, and 445–465; these read MTIF…HLLI, LHFL…GAVI, PNMF…YSLH, LFAV…IYFL, FAFG…IFNA, LGYF…TGLI, GLAE…GIVM, VAFL…FSFP, ISFV…NIFP, MFIM…SLHL, and TTII…MPLI. Position 504 is a phosphothreonine (T504). Phosphoserine is present on residues S565 and S567.

It belongs to the monovalent cation:proton antiporter 1 (CPA1) transporter (TC 2.A.36) family. As to expression, intestine and kidneys.

Its subcellular location is the golgi apparatus membrane. The protein resides in the golgi apparatus. It is found in the trans-Golgi network membrane. It localises to the endosome. The protein localises to the multivesicular body membrane. Its subcellular location is the apical cell membrane. The protein resides in the cytoplasmic vesicle. It is found in the secretory vesicle. It localises to the acrosome. The catalysed reaction is Na(+)(in) + H(+)(out) = Na(+)(out) + H(+)(in). Expression and activity are regulated by acid media by increasing the rate of trafficking to the apical membrane. Inhibited by HOE694 and S3226. Functionally, na(+)/H(+) antiporter. Mediates the electoneutral exchange of intracellular H(+) ions for extracellular Na(+) in 1:1 stoichiometry. Acts as an Na(+)/H(+) exchanger in the trans-Golgi. Contributes to the regulation of pH regulation of Golgi apparatus, and consequently, in protein trafficking and endosomal morphology. In germ cells, plays a crucial role in acrosome biogenesis and sperm development, probably by playing a role in the fusion of the Golgi-derived vesicles that form the acrosomal cap. Can also be active at the cell surface of specialized cells. In the small intestine, at the cell membrane, plays a major physiological role in transepithelial absorption of Na(+) and regulates intracellular pH homeostasis of intestinal epithelial cells. Acts as an important regulator of mucosal integrity in the intestine and in the stomach, could mediate the pH fluctuation necessary for mucin exocytosis or assist membrane trafficking of other proteins. Plays a role in photoreceptor survival and in the maintenance of intracellular pH homeostasis in retinal pigment epithelium (RPE cells). This is Sodium/hydrogen exchanger 8 (Slc9a8) from Rattus norvegicus (Rat).